The following is a 310-amino-acid chain: Homeobox protein Hox-A13a (310 aa).

Residues Gly244–Val303 constitute a DNA-binding region (homeobox).

The protein belongs to the Abd-B homeobox family.

It localises to the nucleus. Sequence-specific transcription factor which is part of a developmental regulatory system that provides cells with specific positional identities on the anterior-posterior axis. The chain is Homeobox protein Hox-A13a (hoxa13a) from Danio rerio (Zebrafish).